The following is a 486-amino-acid chain: ATP synthase subunit beta (486 aa).

170 to 177 contacts ATP; it reads GGAGVGKT.

Belongs to the ATPase alpha/beta chains family. In terms of assembly, F-type ATPases have 2 components, CF(1) - the catalytic core - and CF(0) - the membrane proton channel. CF(1) has five subunits: alpha(3), beta(3), gamma(1), delta(1), epsilon(1). CF(0) has three main subunits: a(1), b(2) and c(9-12). The alpha and beta chains form an alternating ring which encloses part of the gamma chain. CF(1) is attached to CF(0) by a central stalk formed by the gamma and epsilon chains, while a peripheral stalk is formed by the delta and b chains.

Its subcellular location is the cell membrane. It carries out the reaction ATP + H2O + 4 H(+)(in) = ADP + phosphate + 5 H(+)(out). Its function is as follows. Produces ATP from ADP in the presence of a proton gradient across the membrane. The catalytic sites are hosted primarily by the beta subunits. The chain is ATP synthase subunit beta from Clavibacter michiganensis subsp. michiganensis (strain NCPPB 382).